The chain runs to 394 residues: Elongation factor Tu (394 aa).

One can recognise a tr-type G domain in the interval 10–204 (KPHVNVGTIG…ALDNYIPEPE (195 aa)). A G1 region spans residues 19–26 (GHVDHGKT). Residue 19-26 (GHVDHGKT) participates in GTP binding. A Mg(2+)-binding site is contributed by threonine 26. The tract at residues 60–64 (GITIS) is G2. The interval 81–84 (DCPG) is G3. Residues 81–85 (DCPGH) and 136–139 (NKCD) contribute to the GTP site. The G4 stretch occupies residues 136–139 (NKCD). Positions 174 to 176 (SAL) are G5.

This sequence belongs to the TRAFAC class translation factor GTPase superfamily. Classic translation factor GTPase family. EF-Tu/EF-1A subfamily. In terms of assembly, monomer.

The protein resides in the cytoplasm. The catalysed reaction is GTP + H2O = GDP + phosphate + H(+). Functionally, GTP hydrolase that promotes the GTP-dependent binding of aminoacyl-tRNA to the A-site of ribosomes during protein biosynthesis. In Idiomarina loihiensis (strain ATCC BAA-735 / DSM 15497 / L2-TR), this protein is Elongation factor Tu.